Consider the following 113-residue polypeptide: MRRCAWAVRALSHMDSSMCSSAPDPEMWIIQGTLAWRTSPVRTGFETKPLLRRIDGAIQVRSNVDPTFYSLVGSGRSGGDPHGSSLLENPYIPYQCMDSYLSSTGLGSASMGK.

It belongs to the ycf68 family.

It localises to the plastid. It is found in the chloroplast. This is an uncharacterized protein from Eucalyptus globulus subsp. globulus (Tasmanian blue gum).